The sequence spans 1166 residues: ATP-dependent helicase/deoxyribonuclease subunit B (1166 aa).

A UvrD-like helicase ATP-binding domain is found at 1–290 (MGMRFILGRS…DTLEGNFQNR (290 aa)). Residue 8–15 (GRSGTNKS) coordinates ATP. The UvrD-like helicase C-terminal domain occupies 283–588 (LEGNFQNRPY…QFSHVPPSMD (306 aa)). Cysteine 802, cysteine 1123, cysteine 1126, and cysteine 1132 together coordinate [4Fe-4S] cluster.

Belongs to the helicase family. AddB/RexB type 1 subfamily. As to quaternary structure, heterodimer of AddA and AddB. It depends on Mg(2+) as a cofactor. Requires [4Fe-4S] cluster as cofactor.

The heterodimer acts as both an ATP-dependent DNA helicase and an ATP-dependent, dual-direction single-stranded exonuclease. Recognizes the chi site generating a DNA molecule suitable for the initiation of homologous recombination. The AddB subunit has 5' -&gt; 3' nuclease activity but not helicase activity. This is ATP-dependent helicase/deoxyribonuclease subunit B from Oceanobacillus iheyensis (strain DSM 14371 / CIP 107618 / JCM 11309 / KCTC 3954 / HTE831).